A 294-amino-acid polypeptide reads, in one-letter code: Homoserine kinase (294 aa).

83–93 contributes to the ATP binding site; it reads PLARGLGSSAS.

It belongs to the GHMP kinase family. Homoserine kinase subfamily.

It is found in the cytoplasm. It carries out the reaction L-homoserine + ATP = O-phospho-L-homoserine + ADP + H(+). Its pathway is amino-acid biosynthesis; L-threonine biosynthesis; L-threonine from L-aspartate: step 4/5. Its function is as follows. Catalyzes the ATP-dependent phosphorylation of L-homoserine to L-homoserine phosphate. In Oceanobacillus iheyensis (strain DSM 14371 / CIP 107618 / JCM 11309 / KCTC 3954 / HTE831), this protein is Homoserine kinase.